A 558-amino-acid polypeptide reads, in one-letter code: Glucose-6-phosphate isomerase (558 aa).

An N-acetylalanine modification is found at A2. K12 bears the N6-acetyllysine mark. K34 carries the N6-(2-hydroxyisobutyryl)lysine modification. S107 carries the post-translational modification Phosphoserine. Phosphothreonine is present on T109. K142 bears the N6-acetyllysine mark. 159-160 contributes to the D-glucose 6-phosphate binding site; sequence GS. Position 185 is a phosphoserine; by CK2 (S185). Residue 210–215 coordinates D-glucose 6-phosphate; it reads SKTFTT. T250 bears the Phosphothreonine mark. The D-glucose 6-phosphate site is built by Q354, E358, and H389. E358 serves as the catalytic Proton donor. H389 is an active-site residue. K454 is subject to N6-acetyllysine; alternate. K454 bears the N6-malonyllysine; alternate mark. Residue K454 is modified to N6-succinyllysine; alternate. S455 carries the phosphoserine modification. K519 is a D-glucose 6-phosphate binding site. Residue K519 is part of the active site.

Belongs to the GPI family. As to quaternary structure, homodimer; in the catalytically active form. Monomer in the secreted form. Phosphorylation at Ser-185 by CK2 has been shown to decrease enzymatic activity and may contribute to secretion by a non-classical secretory pathway. In terms of processing, ISGylated.

The protein resides in the cytoplasm. Its subcellular location is the secreted. The enzyme catalyses alpha-D-glucose 6-phosphate = beta-D-fructose 6-phosphate. It functions in the pathway carbohydrate degradation; glycolysis; D-glyceraldehyde 3-phosphate and glycerone phosphate from D-glucose: step 2/4. Its activity is regulated as follows. Strongly inhibited by erythrose 4-phosphate. In terms of biological role, in the cytoplasm, catalyzes the conversion of glucose-6-phosphate to fructose-6-phosphate, the second step in glycolysis, and the reverse reaction during gluconeogenesis. Besides it's role as a glycolytic enzyme, also acts as a secreted cytokine: acts as an angiogenic factor (AMF) that stimulates endothelial cell motility. Acts as a neurotrophic factor, neuroleukin, for spinal and sensory neurons. It is secreted by lectin-stimulated T-cells and induces immunoglobulin secretion. The chain is Glucose-6-phosphate isomerase from Homo sapiens (Human).